Reading from the N-terminus, the 262-residue chain is ATP synthase subunit a 1 (262 aa).

5 helical membrane-spanning segments follow: residues 30–50 (TVHI…ILVF), 91–111 (IAPL…MDLI), 131–151 (IVPT…FALM), 201–221 (LFGN…LMPW), and 232–252 (AIFH…LTIV).

Belongs to the ATPase A chain family. As to quaternary structure, F-type ATPases have 2 components, CF(1) - the catalytic core - and CF(0) - the membrane proton channel. CF(1) has five subunits: alpha(3), beta(3), gamma(1), delta(1), epsilon(1). CF(0) has three main subunits: a(1), b(2) and c(9-12). The alpha and beta chains form an alternating ring which encloses part of the gamma chain. CF(1) is attached to CF(0) by a central stalk formed by the gamma and epsilon chains, while a peripheral stalk is formed by the delta and b chains.

It localises to the cell inner membrane. Its function is as follows. Key component of the proton channel; it plays a direct role in the translocation of protons across the membrane. The protein is ATP synthase subunit a 1 of Photobacterium profundum (strain SS9).